A 351-amino-acid chain; its full sequence is Nicotinate-nucleotide--dimethylbenzimidazole phosphoribosyltransferase (351 aa).

Glu-317 functions as the Proton acceptor in the catalytic mechanism.

The protein belongs to the CobT family.

The enzyme catalyses 5,6-dimethylbenzimidazole + nicotinate beta-D-ribonucleotide = alpha-ribazole 5'-phosphate + nicotinate + H(+). It participates in nucleoside biosynthesis; alpha-ribazole biosynthesis; alpha-ribazole from 5,6-dimethylbenzimidazole: step 1/2. Functionally, catalyzes the synthesis of alpha-ribazole-5'-phosphate from nicotinate mononucleotide (NAMN) and 5,6-dimethylbenzimidazole (DMB). In Pseudomonas putida (strain W619), this protein is Nicotinate-nucleotide--dimethylbenzimidazole phosphoribosyltransferase.